A 311-amino-acid polypeptide reads, in one-letter code: T-cell acute lymphocytic leukemia protein 1 homolog (311 aa).

Residues 1–14 (MTMDRPPAPPPPSS) show a composition bias toward pro residues. The interval 1–67 (MTMDRPPAPP…RPSPGPPAAA (67 aa)) is disordered. Residues 15–25 (DPRDARRHDPE) show a composition bias toward basic and acidic residues. The 53-residue stretch at 179-231 (VRRIFTNSRERWRQQNVNGAFAELRKLIPTHPPDKKLSKNEILRLAMKYINFL) folds into the bHLH domain. Positions 265–311 (SPNSSCGSSLDGAASPDSFTEEHDTLDSKHARNLHHAILPVEGSAQR) are disordered. The segment covering 284–294 (TEEHDTLDSKH) has biased composition (basic and acidic residues).

In terms of assembly, efficient DNA binding requires dimerization with another bHLH protein. Forms heterodimers with TCF3. In terms of processing, phosphorylated on serine residues.

Its subcellular location is the nucleus. In terms of biological role, implicated in the genesis of hemopoietic malignancies. It may play an important role in hemopoietic differentiation. The polypeptide is T-cell acute lymphocytic leukemia protein 1 homolog (TAL1) (Gallus gallus (Chicken)).